A 230-amino-acid polypeptide reads, in one-letter code: 3-beta-hydroxysteroid-Delta(8),Delta(7)-isomerase (230 aa).

The residue at position 2 (Thr-2) is an N-acetylthreonine. 4 consecutive transmembrane segments (helical) span residues 29–49 (WHIL…TWLL), 66–86 (LCWF…FVLY), 121–141 (METI…IAFL), and 185–205 (FWFY…VLVL). The EXPERA domain maps to 61-204 (WRRLSLCWFA…LWLVLPGVLV (144 aa)).

Belongs to the EBP family.

It localises to the endoplasmic reticulum membrane. It is found in the nucleus envelope. The protein localises to the cytoplasmic vesicle. It catalyses the reaction lathosterol = 5alpha-cholest-8-en-3beta-ol. The catalysed reaction is zymosterol = 5alpha-cholesta-7,24-dien-3beta-ol. The enzyme catalyses 5,6alpha-epoxy-5alpha-cholestan-3beta-ol + H2O = 5alpha-cholestane-3beta,5,6beta-triol. It carries out the reaction 5,6beta-epoxy-5beta-cholestan-3beta-ol + H2O = 5alpha-cholestane-3beta,5,6beta-triol. It functions in the pathway steroid biosynthesis; cholesterol biosynthesis. With respect to regulation, cholestenol Delta-isomerase and cholesterol-5,6-epoxide hydrolase (ChEH) activities are inhibited by tamoxifen and the selective AEBS ligand (4-benzyl-phenoxy)-ethyl-N-pyrrolidine (PBPE). ChEH activity is inhibited by oleic acid. Functionally, isomerase that catalyzes the conversion of Delta(8)-sterols to their corresponding Delta(7)-isomers a catalytic step in the postlanosterol biosynthesis of cholesterol. In terms of biological role, component of the microsomal antiestrogen binding site (AEBS), a multiproteic complex at the ER membrane that consists of an association between EBP and 7-dehydrocholesterol reductase/DHCR7. This complex is responsible for cholesterol-5,6-epoxide hydrolase (ChEH) activity, which consists in the hydration of cholesterol-5,6-epoxides (5,6-EC) into cholestane-3beta,5alpha,6beta-triol (CT). The precise role of each component of this complex has not been described yet. The sequence is that of 3-beta-hydroxysteroid-Delta(8),Delta(7)-isomerase from Homo sapiens (Human).